We begin with the raw amino-acid sequence, 205 residues long: Lipoprotein MlpB (205 aa).

The N-terminal stretch at methionine 1–serine 17 is a signal peptide. The N-palmitoyl cysteine moiety is linked to residue cysteine 18. Cysteine 18 is lipidated: S-diacylglycerol cysteine.

Belongs to the Multicopy lipoprotein (Mlp) family.

It is found in the cell outer membrane. Functionally, an outer membrane protein that may participate in pathogenesis. Some human Lyme disease patients have antibodies against this protein. The Mlp proteins probably undergo intragenic recombination, generating new alleles. This chain is Lipoprotein MlpB, found in Borreliella burgdorferi (strain ATCC 35210 / DSM 4680 / CIP 102532 / B31) (Borrelia burgdorferi).